A 156-amino-acid chain; its full sequence is Crossover junction endodeoxyribonuclease RuvC (156 aa).

Residues D7, E67, and D140 contribute to the active site. Mg(2+) is bound by residues D7, E67, and D140.

The protein belongs to the RuvC family. Homodimer which binds Holliday junction (HJ) DNA. The HJ becomes 2-fold symmetrical on binding to RuvC with unstacked arms; it has a different conformation from HJ DNA in complex with RuvA. In the full resolvosome a probable DNA-RuvA(4)-RuvB(12)-RuvC(2) complex forms which resolves the HJ. Mg(2+) is required as a cofactor.

Its subcellular location is the cytoplasm. The enzyme catalyses Endonucleolytic cleavage at a junction such as a reciprocal single-stranded crossover between two homologous DNA duplexes (Holliday junction).. Functionally, the RuvA-RuvB-RuvC complex processes Holliday junction (HJ) DNA during genetic recombination and DNA repair. Endonuclease that resolves HJ intermediates. Cleaves cruciform DNA by making single-stranded nicks across the HJ at symmetrical positions within the homologous arms, yielding a 5'-phosphate and a 3'-hydroxyl group; requires a central core of homology in the junction. The consensus cleavage sequence is 5'-(A/T)TT(C/G)-3'. Cleavage occurs on the 3'-side of the TT dinucleotide at the point of strand exchange. HJ branch migration catalyzed by RuvA-RuvB allows RuvC to scan DNA until it finds its consensus sequence, where it cleaves and resolves the cruciform DNA. The chain is Crossover junction endodeoxyribonuclease RuvC from Rickettsia felis (strain ATCC VR-1525 / URRWXCal2) (Rickettsia azadi).